Here is a 514-residue protein sequence, read N- to C-terminus: 2-isopropylmalate synthase (514 aa).

Residues 5–268 (LIIFDTTLRD…DVGLDTTQIV (264 aa)) form the Pyruvate carboxyltransferase domain. Mn(2+) is bound by residues aspartate 14, histidine 202, histidine 204, and asparagine 239. Residues 395–514 (KFVSLSQRSE…KDDKLNPQRS (120 aa)) form a regulatory domain region.

It belongs to the alpha-IPM synthase/homocitrate synthase family. LeuA type 1 subfamily. Homodimer. Mn(2+) serves as cofactor.

The protein resides in the cytoplasm. It catalyses the reaction 3-methyl-2-oxobutanoate + acetyl-CoA + H2O = (2S)-2-isopropylmalate + CoA + H(+). Its pathway is amino-acid biosynthesis; L-leucine biosynthesis; L-leucine from 3-methyl-2-oxobutanoate: step 1/4. Functionally, catalyzes the condensation of the acetyl group of acetyl-CoA with 3-methyl-2-oxobutanoate (2-ketoisovalerate) to form 3-carboxy-3-hydroxy-4-methylpentanoate (2-isopropylmalate). The sequence is that of 2-isopropylmalate synthase from Burkholderia ambifaria (strain MC40-6).